The following is a 470-amino-acid chain: MTELPDNTRWQLWIVALGFFMQSLDTTIVNTALPSMAKSLGESPLHMHMVVVSYVLTVAVMLPASGWLADKIGVRNIFFAAIVLFTLGSLFCALSGTLNQLVLARVLQGVGGAMMVPVGRLTVMKIVPRAQYMAAMTFVTLPGQIGPLLGPALGGVLVEYASWHWIFLINIPVGIVGAMATFMLMPNYTIETRRFDLPGFLLLAIGMAVLTLALDGSKSMGISPWTLAGLAAGGAAAILLYLLHAKKNSGALFSLRLFRTPTFSLGLLGSFAGRIGSGMLPFMTPVFLQIGLGFSPFHAGLMMIPMVLGSMGMKRIVVQIVNRFGYRRVLVATTLGLALVSLLFMSVALLGWYYLLPLVLLLQGMVNSARFSSMNTLTLKDLPDTLASSGNSLLSMIMQLSMSIGVTIAGMLLGMFGQQHIGIDSSATHHVFMYTWLCMAVIIALPAIIFARVPNDTQQNMVISRRKRSL.

Residues 1–11 (MTELPDNTRWQ) are Periplasmic-facing. Residues 12 to 32 (LWIVALGFFMQSLDTTIVNTA) traverse the membrane as a helical segment. Residues 33 to 48 (LPSMAKSLGESPLHMH) are Cytoplasmic-facing. A helical transmembrane segment spans residues 49-69 (MVVVSYVLTVAVMLPASGWLA). Over 70–76 (DKIGVRN) the chain is Periplasmic. A helical membrane pass occupies residues 77–97 (IFFAAIVLFTLGSLFCALSGT). The Cytoplasmic portion of the chain corresponds to 98–101 (LNQL). The helical transmembrane segment at 102–124 (VLARVLQGVGGAMMVPVGRLTVM) threads the bilayer. Residues 125–137 (KIVPRAQYMAAMT) are Periplasmic-facing. The helical transmembrane segment at 138–158 (FVTLPGQIGPLLGPALGGVLV) threads the bilayer. At 159–164 (EYASWH) the chain is on the cytoplasmic side. Residues 165–185 (WIFLINIPVGIVGAMATFMLM) form a helical membrane-spanning segment. The Periplasmic portion of the chain corresponds to 186 to 196 (PNYTIETRRFD). The chain crosses the membrane as a helical span at residues 197–217 (LPGFLLLAIGMAVLTLALDGS). The Cytoplasmic portion of the chain corresponds to 218–221 (KSMG). Residues 222 to 242 (ISPWTLAGLAAGGAAAILLYL) traverse the membrane as a helical segment. Residues 243–262 (LHAKKNSGALFSLRLFRTPT) are Periplasmic-facing. Residues 263 to 283 (FSLGLLGSFAGRIGSGMLPFM) form a helical membrane-spanning segment. Topologically, residues 284 to 285 (TP) are cytoplasmic. Residues 286-306 (VFLQIGLGFSPFHAGLMMIPM) form a helical membrane-spanning segment. The Periplasmic portion of the chain corresponds to 307–341 (VLGSMGMKRIVVQIVNRFGYRRVLVATTLGLALVS). A helical transmembrane segment spans residues 342 to 362 (LLFMSVALLGWYYLLPLVLLL). The Cytoplasmic segment spans residues 363–395 (QGMVNSARFSSMNTLTLKDLPDTLASSGNSLLS). Residues 396–416 (MIMQLSMSIGVTIAGMLLGMF) form a helical membrane-spanning segment. Residues 417 to 430 (GQQHIGIDSSATHH) are Periplasmic-facing. A helical transmembrane segment spans residues 431–451 (VFMYTWLCMAVIIALPAIIFA). At 452–470 (RVPNDTQQNMVISRRKRSL) the chain is on the cytoplasmic side.

Belongs to the major facilitator superfamily. TCR/Tet family.

Its subcellular location is the cell inner membrane. The polypeptide is Putative multidrug resistance protein MdtD (Salmonella heidelberg (strain SL476)).